The sequence spans 56 residues: Small ribosomal subunit protein uS14 (56 aa).

Zn(2+)-binding residues include Cys-21, Cys-24, Cys-39, and Cys-42.

This sequence belongs to the universal ribosomal protein uS14 family. Zinc-binding uS14 subfamily. In terms of assembly, part of the 30S ribosomal subunit. It depends on Zn(2+) as a cofactor.

Binds 16S rRNA, required for the assembly of 30S particles. This is Small ribosomal subunit protein uS14 from Methanospirillum hungatei JF-1 (strain ATCC 27890 / DSM 864 / NBRC 100397 / JF-1).